The chain runs to 159 residues: Prs ADP-ribosylating antitoxin (159 aa).

Positions 99 to 159 (EDMVEESGET…LAQIQSGAFA (61 aa)) are sufficient to neutralize toxin.

This sequence belongs to the MbcA/ParS/Xre antitoxin family. Forms heterotetrameric ParS(2)-ParT(2) complexes. The 2 antitoxin fragments do not make contact in the crystal structure.

In terms of biological role, antitoxin component of a type II toxin-antitoxin (TA) system. Neutralizes the bacteriostatic effect of cognate toxin ParT by inserting into its active site. The chain is Prs ADP-ribosylating antitoxin from Sphingobium sp. (strain YBL2).